Here is a 387-residue protein sequence, read N- to C-terminus: Probable multidrug resistance protein EmrK (387 aa).

The Cytoplasmic portion of the chain corresponds to 1–16; it reads MEQINSNKKHSNRRKY. A helical transmembrane segment spans residues 17-37; sequence FSLLAVVLFIAFSGAYAYWSM. Over 38-387 the chain is Periplasmic; the sequence is ELEDMISTDD…SNIISHNGQL (350 aa).

It belongs to the membrane fusion protein (MFP) (TC 8.A.1) family. As to quaternary structure, part of the tripartite efflux system EmrYK-TolC, which is composed of an inner membrane transporter, EmrY, a membrane fusion protein, EmrK, and an outer membrane component, TolC. The complex forms a large protein conduit and can translocate molecules across both the inner and outer membranes.

It localises to the cell inner membrane. Its function is as follows. Part of the tripartite efflux system EmrYK-TolC, which confers resistance to various drugs. This Escherichia coli (strain K12) protein is Probable multidrug resistance protein EmrK (emrK).